The primary structure comprises 795 residues: RAS guanyl-releasing protein 1 (795 aa).

Basic and acidic residues predominate over residues Met1–Arg12. The segment at Met1–Ala37 is disordered. The N-terminal Ras-GEF domain maps to Leu53 to Ser176. Positions Ala57–Tyr110 are ras exchanger motif region; required for transforming activity. A Phosphothreonine; by PKC modification is found at Thr184. One can recognise a Ras-GEF domain in the interval Glu205–Arg436. 2 consecutive EF-hand domains span residues His470–Ser505 and Phe506–Ile532. Residues Asp483, Asp485, Asp487, Tyr489, and Glu494 each contribute to the Ca(2+) site. Residues Pro541 to Cys591 form a Phorbol-ester/DAG-type zinc finger. Ser597 is modified (phosphoserine). Residues Thr686–Ser694 are suppress the PT region-mediated translocation to plasma membrane. A PT region; mediates the BCR-dependent translocation to plasma membrane region spans residues Leu717–Ala795. A coiled-coil region spans residues Glu738 to Leu779.

This sequence belongs to the RASGRP family. As to quaternary structure, homodimer. Forms a signaling complex with DGKZ and HRAS. Interacts with F-actin. Interacts with SKAP1. Detected in spleen and thymus. Expressed by mature thymocytes and to a lower extent by bone marrow-derived mast cells (at protein level). Detected in B-cells and keratinocytes (at protein level).

Its subcellular location is the cytoplasm. It localises to the cytosol. The protein localises to the cell membrane. The protein resides in the golgi apparatus membrane. It is found in the endoplasmic reticulum membrane. Autoinhibited. Activated by diacylglycerol and calcium binding, which induces a conformational change releasing the autoinhibitory state. Regulated by DGKA. Regulated by DGKZ. Regulated by PLC gamma and F-actin polymerization. Functions as a calcium- and diacylglycerol (DAG)-regulated nucleotide exchange factor specifically activating Ras through the exchange of bound GDP for GTP. Activates the Erk/MAP kinase cascade. Regulates T-cell/B-cell development, homeostasis and differentiation by coupling T-lymphocyte/B-lymphocyte antigen receptors to Ras. Regulates NK cell cytotoxicity and ITAM-dependent cytokine production by activation of Ras-mediated ERK and JNK pathways. Functions in mast cell degranulation and cytokine secretion, regulating FcERI-evoked allergic responses. May also function in differentiation of other cell types. Proto-oncogene, which promotes T-cell lymphomagenesis when its expression is deregulated. This is RAS guanyl-releasing protein 1 (Rasgrp1) from Mus musculus (Mouse).